Here is a 485-residue protein sequence, read N- to C-terminus: Sphingosine kinase 1 (485 aa).

The DAGKc domain occupies 116-258 (GRPKKLLVFV…LDVATISQGT (143 aa)). ATP is bound by residues 126–128 (NPF) and Thr158. Position 183–186 (183–186 (SGDG)) interacts with substrate. Asp185 serves as the catalytic Proton donor/acceptor. ATP-binding positions include Glu190 and 215 to 217 (GSG). Residue Asp276 coordinates substrate. Residues Arg283, Arg289, and 446–448 (DGE) each bind ATP.

Mg(2+) serves as cofactor. Highly expressed in stems and flowers and at lower levels in roots, leaves and siliques.

It localises to the vacuole membrane. It catalyses the reaction a sphingoid base + ATP = a sphingoid 1-phosphate + ADP + H(+). Activated by phosphatidic acid (PA). Binding with PA stimulates the activity by promoting the binding of substrate to the catalytic site. Its function is as follows. Involved in the production of sphingolipid metabolites. Phosphorylates sphingosine and various sphingoid long-chain base (LCB) products, such as phytosphingosine (PHS, 4-hydroxysphinganine), 4-hydroxy-8-sphingenine, 4,8-sphingadienine, D-erythro-dihydrosphingosine and D,L-threo-dihydrosphingosine. Is required for abscisic acid (ABA) signaling that mediates stomatal closure, inhibition of seed germination and root elongation. May function upstream of PLDALPHA1 and phosphatidic acid (PA) in an amplification response to ABA that mediates stomatal closure. The chain is Sphingosine kinase 1 (SPHK1) from Arabidopsis thaliana (Mouse-ear cress).